The chain runs to 341 residues: Putative amino-acid ABC transporter-binding protein YhdW (341 aa).

The signal sequence occupies residues 1 to 19 (MKKMMIATLAAASVLLAVA).

Belongs to the bacterial solute-binding protein 3 family.

It is found in the periplasm. Its function is as follows. Probably part of the binding-protein-dependent transport system YdhWXYZ for an amino acid. This chain is Putative amino-acid ABC transporter-binding protein YhdW (yhdW), found in Escherichia coli O157:H7.